The primary structure comprises 242 residues: 7-cyano-7-deazaguanine synthase (242 aa).

12 to 22 (FSGGQDSATCL) provides a ligand contact to ATP. Zn(2+)-binding residues include Cys200, Cys215, Cys218, and Cys221.

This sequence belongs to the QueC family. Zn(2+) is required as a cofactor.

It carries out the reaction 7-carboxy-7-deazaguanine + NH4(+) + ATP = 7-cyano-7-deazaguanine + ADP + phosphate + H2O + H(+). The protein operates within purine metabolism; 7-cyano-7-deazaguanine biosynthesis. Its function is as follows. Catalyzes the ATP-dependent conversion of 7-carboxy-7-deazaguanine (CDG) to 7-cyano-7-deazaguanine (preQ(0)). This is 7-cyano-7-deazaguanine synthase from Gluconobacter oxydans (strain 621H) (Gluconobacter suboxydans).